Here is a 398-residue protein sequence, read N- to C-terminus: Probable aminomethyltransferase (398 aa).

It belongs to the GcvT family. As to quaternary structure, the glycine cleavage system is composed of four proteins: P, T, L and H.

The catalysed reaction is N(6)-[(R)-S(8)-aminomethyldihydrolipoyl]-L-lysyl-[protein] + (6S)-5,6,7,8-tetrahydrofolate = N(6)-[(R)-dihydrolipoyl]-L-lysyl-[protein] + (6R)-5,10-methylene-5,6,7,8-tetrahydrofolate + NH4(+). Its function is as follows. The glycine cleavage system catalyzes the degradation of glycine. The sequence is that of Probable aminomethyltransferase from Thermococcus gammatolerans (strain DSM 15229 / JCM 11827 / EJ3).